Reading from the N-terminus, the 117-residue chain is Large ribosomal subunit protein bL19 (117 aa).

This sequence belongs to the bacterial ribosomal protein bL19 family.

In terms of biological role, this protein is located at the 30S-50S ribosomal subunit interface and may play a role in the structure and function of the aminoacyl-tRNA binding site. This is Large ribosomal subunit protein bL19 from Blochmanniella floridana.